Reading from the N-terminus, the 172-residue chain is uncharacterized protein (172 aa).

This is an uncharacterized protein from Microplitis demolitor bracovirus (isolate Webb) (MdBV).